Here is a 95-residue protein sequence, read N- to C-terminus: Cytosolic calcium-binding protein 3 (95 aa).

Repeat copies occupy residues 30-35, 39-43, 54-59, 67-71, 75-79, and 90-94. The tract at residues 30 to 94 is 6 X 5 AA approximate repeats of V-E-E-K-K; the sequence is VEDAEKTNED…AEEVAVEKAK (65 aa). A disordered region spans residues 54-95; that stretch reads VEEEKKAEEVTETPEEKKTEALEEKQTEVAAAEEVAVEKAKE. Residues 55-80 show a composition bias toward basic and acidic residues; that stretch reads EEEKKAEEVTETPEEKKTEALEEKQT.

In terms of tissue distribution, low levels in roots (e.g. in cambium) and barely expressed in stems, shoots, flowers, siliques and leaves.

The protein localises to the cytoplasm. Its subcellular location is the cytosol. Its function is as follows. Binds calcium Ca(2+) and may act as a signal mediator to buffer Ca(2+). This chain is Cytosolic calcium-binding protein 3, found in Arabidopsis thaliana (Mouse-ear cress).